The following is a 75-amino-acid chain: Large ribosomal subunit protein bL31 (75 aa).

This sequence belongs to the bacterial ribosomal protein bL31 family. Type A subfamily. Part of the 50S ribosomal subunit.

Binds the 23S rRNA. This chain is Large ribosomal subunit protein bL31, found in Bradyrhizobium sp. (strain BTAi1 / ATCC BAA-1182).